A 1004-amino-acid chain; its full sequence is MAKQEQAPGRANDVFALTSFLYGGNADYIEELYAKYEDDPNSVDPQWRDFFAKLGDNADDVKKNAEGPSWTRKNWPIAANGELVSALDGNWAEVEKHVTDKLKGKAAKGEAKGAAGTPLTAEEITQAARDSVRAIMMIRAYRMRGHLHANLDPLGLAEKPNDYNELEPENYGFTPADYNRKIFIDNVLGLEYATVPEMLDILKRTYCGAIGVEFMHISDPAEKAWIQERIEGPDKKVAFTPEGKMAILSKLIEAEGFEQFIDVKYKGTKRFGLDGGESLIPALEQIVKRGGQMGLKEVVLGMAHRGRLNVLSQVMGKPHRAIFHEFKGGSYTPDDVEGSGDVKYHLGASSDREFDGNKVHLSLTANPSHLEIVNPVVMGKARAKQDLLVGRTRDDMVPLSERAKVLPLLLHGDAAFAGQGVVAECLGLSGLKGHRVAGTLHFIINNQIGFTTNPAFSRSSPYPSDVAKMIEAPIFHVNGDDPEAVVFAAKVATEFRMTFHKPVVIDMFCYRRFGHNEGDEPSFTQPLMYKAIRAHKTTVQLYGEKLIAEGLVTQDDIDRMKADWRQKLEGEFEAGQSYKPNKADWLDGAWAGLRTADNADEQRCGKTAVPVKTLKEIGKKLVEVPKDFHVHRTIQRFLDNRAKMMETGEGIDWATAESLAFGSLAVEGHPIRLSGQDVERGTFSQRHTVLYDQENQNRYIPLNNLQKGQAIYEAINSMLSEEAVLGYEYGYSLSDPRALVLWEAQFGDFANGAQVVFDQFISSGERKWLRMSGLVCLLPHGFEGQGPEHSSARLERYLQLCAEDNMQVANVTTPANYFHILRRQMKRDFRKPLIMMTPKSLLRHKRAISTLAELSGESSFHRLLWDDAQYNKDEGIKLQKDAKIRRVVLCSGKVYYDLYEEREKRGIDDVYLLRVEQLYPFPAKALINELSRFRHAEMVWCQEEPKNMGAWSFIDPYLEWVLAHIDAKHQRVRYAGRPAAASPATGLMSKHLAQLAAFLEDALG.

The protein belongs to the alpha-ketoglutarate dehydrogenase family. As to quaternary structure, homodimer. Part of the 2-oxoglutarate dehydrogenase (OGDH) complex composed of E1 (2-oxoglutarate dehydrogenase), E2 (dihydrolipoamide succinyltransferase) and E3 (dihydrolipoamide dehydrogenase); the complex contains multiple copies of the three enzymatic components (E1, E2 and E3). The cofactor is thiamine diphosphate.

It carries out the reaction N(6)-[(R)-lipoyl]-L-lysyl-[protein] + 2-oxoglutarate + H(+) = N(6)-[(R)-S(8)-succinyldihydrolipoyl]-L-lysyl-[protein] + CO2. Functionally, E1 component of the 2-oxoglutarate dehydrogenase (OGDH) complex which catalyzes the decarboxylation of 2-oxoglutarate, the first step in the conversion of 2-oxoglutarate to succinyl-CoA and CO(2). This Brucella ovis (strain ATCC 25840 / 63/290 / NCTC 10512) protein is 2-oxoglutarate dehydrogenase E1 component.